The sequence spans 307 residues: tRNA dimethylallyltransferase (307 aa).

16–23 (GCTAVGKT) lines the ATP pocket. 18 to 23 (TAVGKT) is a substrate binding site. Residues 41-44 (DSLL) form an interaction with substrate tRNA region.

It belongs to the IPP transferase family. As to quaternary structure, monomer. It depends on Mg(2+) as a cofactor.

It catalyses the reaction adenosine(37) in tRNA + dimethylallyl diphosphate = N(6)-dimethylallyladenosine(37) in tRNA + diphosphate. Its function is as follows. Catalyzes the transfer of a dimethylallyl group onto the adenine at position 37 in tRNAs that read codons beginning with uridine, leading to the formation of N6-(dimethylallyl)adenosine (i(6)A). This is tRNA dimethylallyltransferase from Opitutus terrae (strain DSM 11246 / JCM 15787 / PB90-1).